Here is a 473-residue protein sequence, read N- to C-terminus: P3 protein (473 aa).

9 consecutive transmembrane segments (helical) span residues 25 to 45 (FVGMLGTALLFISLPWGAQVM), 221 to 241 (PMLLGLLGQFLVMPFYAFLMA), 249 to 269 (ALALGLIITCSSPGGGGSYLF), 277 to 297 (VTLAISMTFISTVAATGFLPL), 316 to 336 (ISKILGTLLFIAIPIAAGVVI), 356 to 376 (FILLLGGLFLAYHMGVFILVG), 381 to 401 (IVLVGFTVPLVGLLVGYSLAI), 413 to 433 (VSIEVGVQNSLLALAMLQLSL), and 446 to 466 (FIVALSGTSEMLALVIGQFIY).

It belongs to the bile acid:sodium symporter (BASS) (TC 2.A.28) family.

The protein resides in the membrane. In terms of biological role, the ubiquitous expression and the conservation of the sequence in distant animal species suggest that the gene codes for a protein with housekeeping functions. The polypeptide is P3 protein (Slc10a3) (Mus musculus (Mouse)).